The sequence spans 263 residues: Protein phosphatase type 2A regulatory subunit RTS3 (263 aa).

Disordered regions lie at residues 1–62 and 149–176; these read MIAT…AQRR and LPLT…ISNG. Over residues 46-61 the composition is skewed to low complexity; the sequence is LSTSSSPSSSPMSAQR. Phosphoserine is present on residues serine 172, serine 192, serine 214, and serine 238.

It localises to the cytoplasm. It is found in the nucleus. In terms of biological role, may be a component of a protein phosphatase type 2A (PP2A) complex. Negatively regulates SIT4 phosphatase, a modulators of caffeine sensitivity. The protein is Protein phosphatase type 2A regulatory subunit RTS3 (RTS3) of Saccharomyces cerevisiae (strain ATCC 204508 / S288c) (Baker's yeast).